Here is a 115-residue protein sequence, read N- to C-terminus: UPF0295 protein BPUM_0828 (115 aa).

2 helical membrane-spanning segments follow: residues 13-33 and 41-61; these read TFAL…VFFK and FFML…FWIG.

Belongs to the UPF0295 family.

It is found in the cell membrane. This Bacillus pumilus (strain SAFR-032) protein is UPF0295 protein BPUM_0828.